An 829-amino-acid chain; its full sequence is Periplasmic nitrate reductase (829 aa).

The segment at residues M1–A29 is a signal peptide (tat-type signal). Positions I41–D97 constitute a 4Fe-4S Mo/W bis-MGD-type domain. [4Fe-4S] cluster-binding residues include C48, C51, C55, and C83. Mo-bis(molybdopterin guanine dinucleotide) is bound by residues K85, Q152, N177, C181, W214–M221, S245–H249, Q264–D266, M374, Q378, N484, S510–D511, K533, D560, and T718–T727. F794 is a binding site for substrate. Residues N802 and K819 each coordinate Mo-bis(molybdopterin guanine dinucleotide).

Belongs to the prokaryotic molybdopterin-containing oxidoreductase family. NasA/NapA/NarB subfamily. In terms of assembly, component of the periplasmic nitrate reductase NapAB complex composed of NapA and NapB. [4Fe-4S] cluster is required as a cofactor. Requires Mo-bis(molybdopterin guanine dinucleotide) as cofactor. Post-translationally, predicted to be exported by the Tat system. The position of the signal peptide cleavage has not been experimentally proven.

Its subcellular location is the periplasm. It catalyses the reaction 2 Fe(II)-[cytochrome] + nitrate + 2 H(+) = 2 Fe(III)-[cytochrome] + nitrite + H2O. Functionally, catalytic subunit of the periplasmic nitrate reductase complex NapAB. Receives electrons from NapB and catalyzes the reduction of nitrate to nitrite. This is Periplasmic nitrate reductase from Vibrio atlanticus (strain LGP32) (Vibrio splendidus (strain Mel32)).